A 630-amino-acid polypeptide reads, in one-letter code: Very-long-chain aldehyde decarbonylase GL1-7 (630 aa).

A run of 4 helical transmembrane segments spans residues 93-113, 126-146, 185-205, and 325-345; these read LYLD…YAII, GALI…YWFH, FLLF…SVLA, and VWYM…AWIY. One can recognise a Fatty acid hydroxylase domain in the interval 133–272; it reads LHMGPVEFLY…MPFYDYIYNT (140 aa).

This sequence belongs to the sterol desaturase family. As to quaternary structure, homodimer. Expressed in panicles at low levels.

The protein resides in the endoplasmic reticulum membrane. The enzyme catalyses a long-chain fatty aldehyde + 2 NADPH + O2 + H(+) = a long-chain alkane + formate + 2 NADP(+) + H2O. Functionally, aldehyde decarbonylase involved in the conversion of aldehydes to alkanes. Core component of a very-long-chain alkane synthesis complex. This chain is Very-long-chain aldehyde decarbonylase GL1-7, found in Oryza sativa subsp. japonica (Rice).